Reading from the N-terminus, the 585-residue chain is Cytoplasmic polyadenylation element-binding protein 1 (585 aa).

Residues 1 to 32 (MQHQLKACGDVKTSSRAQQNHRRSTAASAKRS) are disordered. RRM domains lie at 251–356 (RKVF…PWRL) and 373–444 (RTVF…HAET). Positions 513–533 (DQTRILPRPPHHPAAHHSHQR) are disordered. Positions 521-532 (PPHHPAAHHSHQ) are enriched in basic residues.

Interacts with fbf-1.

In terms of biological role, cytoplasmic polyadenylation element binding protein that binds to and regulates the translation of specific mRNAs. Essential for progression through meiosis. Involved in spermatogenesis. This Caenorhabditis briggsae protein is Cytoplasmic polyadenylation element-binding protein 1 (cpb-1).